The chain runs to 255 residues: Pimeloyl-[acyl-carrier protein] methyl ester esterase (255 aa).

One can recognise an AB hydrolase-1 domain in the interval 16-242 (LVLLHGWGMN…SSHAPFITEP (227 aa)). Residues Trp-22, 82–83 (SL), and 143–147 (FMALQ) contribute to the substrate site. The active-site Nucleophile is the Ser-82. Catalysis depends on residues Asp-207 and His-235. His-235 serves as a coordination point for substrate.

This sequence belongs to the AB hydrolase superfamily. Carboxylesterase BioH family. As to quaternary structure, monomer.

Its subcellular location is the cytoplasm. It catalyses the reaction 6-carboxyhexanoyl-[ACP] methyl ester + H2O = 6-carboxyhexanoyl-[ACP] + methanol + H(+). The protein operates within cofactor biosynthesis; biotin biosynthesis. In terms of biological role, the physiological role of BioH is to remove the methyl group introduced by BioC when the pimeloyl moiety is complete. It allows to synthesize pimeloyl-ACP via the fatty acid synthetic pathway through the hydrolysis of the ester bonds of pimeloyl-ACP esters. The sequence is that of Pimeloyl-[acyl-carrier protein] methyl ester esterase from Vibrio vulnificus (strain CMCP6).